The following is an 893-amino-acid chain: Alanine--tRNA ligase (893 aa).

Zn(2+) contacts are provided by His575, His579, Cys677, and His681.

This sequence belongs to the class-II aminoacyl-tRNA synthetase family. Requires Zn(2+) as cofactor.

The protein localises to the cytoplasm. It carries out the reaction tRNA(Ala) + L-alanine + ATP = L-alanyl-tRNA(Ala) + AMP + diphosphate. Its function is as follows. Catalyzes the attachment of alanine to tRNA(Ala) in a two-step reaction: alanine is first activated by ATP to form Ala-AMP and then transferred to the acceptor end of tRNA(Ala). Also edits incorrectly charged Ser-tRNA(Ala) and Gly-tRNA(Ala) via its editing domain. This chain is Alanine--tRNA ligase, found in Synechococcus sp. (strain CC9311).